Here is a 143-residue protein sequence, read N- to C-terminus: Class I hydrophobin 20 (143 aa).

The first 22 residues, 1–22 (MLSHPMKLLFFVFALSALLAAA), serve as a signal peptide directing secretion. 4 disulfide bridges follow: Cys-54/Cys-123, Cys-62/Cys-117, Cys-63/Cys-102, and Cys-124/Cys-137.

It belongs to the fungal hydrophobin family. Self-assembles to form functional amyloid fibrils called rodlets. Self-assembly into fibrillar rodlets occurs spontaneously at hydrophobic:hydrophilic interfaces and the rodlets further associate laterally to form amphipathic monolayers.

The protein resides in the secreted. It is found in the cell wall. Functionally, aerial growth, conidiation, and dispersal of filamentous fungi in the environment rely upon a capability of their secreting small amphipathic proteins called hydrophobins (HPBs) with low sequence identity. Class I can self-assemble into an outermost layer of rodlet bundles on aerial cell surfaces, conferring cellular hydrophobicity that supports fungal growth, development and dispersal; whereas Class II form highly ordered films at water-air interfaces through intermolecular interactions but contribute nothing to the rodlet structure. Hydph20 is a class I hydrophobin involved in mycelial growth. The sequence is that of Class I hydrophobin 20 from Pleurotus ostreatus (strain PC15) (Oyster mushroom).